A 187-amino-acid chain; its full sequence is Adenylate kinase (187 aa).

ATP is bound at residue 10 to 15 (GSGKGT). Residues 30-59 (STGDMLRAEIAAGTELGKQAKTVMDAGNLV) are NMP. AMP contacts are provided by residues Thr-31, Arg-36, 57–59 (NLV), 85–88 (GYPR), and Gln-92. The segment at 126-136 (GRAKEQGRADD) is LID. Residue Arg-127 participates in ATP binding. Residues Arg-133 and Arg-144 each coordinate AMP. An ATP-binding site is contributed by Gly-172.

It belongs to the adenylate kinase family. Monomer.

It is found in the cytoplasm. The enzyme catalyses AMP + ATP = 2 ADP. Its pathway is purine metabolism; AMP biosynthesis via salvage pathway; AMP from ADP: step 1/1. Catalyzes the reversible transfer of the terminal phosphate group between ATP and AMP. Plays an important role in cellular energy homeostasis and in adenine nucleotide metabolism. This chain is Adenylate kinase, found in Stenotrophomonas maltophilia (strain K279a).